We begin with the raw amino-acid sequence, 265 residues long: 4-hydroxy-tetrahydrodipicolinate reductase (265 aa).

NAD(+) is bound at residue 9-14 (GARGKM). Lys-37 serves as a coordination point for NADP(+). NAD(+) is bound by residues 99–101 (GTT) and 125–128 (APNF). The active-site Proton donor/acceptor is the His-155. A (S)-2,3,4,5-tetrahydrodipicolinate-binding site is contributed by His-156. Lys-159 serves as the catalytic Proton donor. 165–166 (GT) is a (S)-2,3,4,5-tetrahydrodipicolinate binding site.

It belongs to the DapB family.

The protein localises to the cytoplasm. It catalyses the reaction (S)-2,3,4,5-tetrahydrodipicolinate + NAD(+) + H2O = (2S,4S)-4-hydroxy-2,3,4,5-tetrahydrodipicolinate + NADH + H(+). The catalysed reaction is (S)-2,3,4,5-tetrahydrodipicolinate + NADP(+) + H2O = (2S,4S)-4-hydroxy-2,3,4,5-tetrahydrodipicolinate + NADPH + H(+). It participates in amino-acid biosynthesis; L-lysine biosynthesis via DAP pathway; (S)-tetrahydrodipicolinate from L-aspartate: step 4/4. In terms of biological role, catalyzes the conversion of 4-hydroxy-tetrahydrodipicolinate (HTPA) to tetrahydrodipicolinate. The protein is 4-hydroxy-tetrahydrodipicolinate reductase of Lysinibacillus sphaericus (strain C3-41).